The following is a 242-amino-acid chain: Phosphoribosyl isomerase A (242 aa).

The active-site Proton acceptor is the Asp12. The Proton donor role is filled by Asp131.

The protein belongs to the HisA/HisF family.

The protein resides in the cytoplasm. The enzyme catalyses 1-(5-phospho-beta-D-ribosyl)-5-[(5-phospho-beta-D-ribosylamino)methylideneamino]imidazole-4-carboxamide = 5-[(5-phospho-1-deoxy-D-ribulos-1-ylimino)methylamino]-1-(5-phospho-beta-D-ribosyl)imidazole-4-carboxamide. It catalyses the reaction N-(5-phospho-beta-D-ribosyl)anthranilate = 1-(2-carboxyphenylamino)-1-deoxy-D-ribulose 5-phosphate. It functions in the pathway amino-acid biosynthesis; L-histidine biosynthesis; L-histidine from 5-phospho-alpha-D-ribose 1-diphosphate: step 4/9. The protein operates within amino-acid biosynthesis; L-tryptophan biosynthesis; L-tryptophan from chorismate: step 3/5. Involved in both the histidine and tryptophan biosynthetic pathways. The chain is Phosphoribosyl isomerase A from Streptomyces avermitilis (strain ATCC 31267 / DSM 46492 / JCM 5070 / NBRC 14893 / NCIMB 12804 / NRRL 8165 / MA-4680).